A 603-amino-acid polypeptide reads, in one-letter code: MKSSLDFLNNFIQRDAVKKLESINNYPLIEFLNSVVKLCEPDSVYLITGSDEEKEYIRKKALESKEEIRLQTSGHTIHFDHPLDQARAREDTFILSDTKIPYVNTKPRNEGLSEMLTLLKGSMRGREMYVGFYSLGPRNSPFQILAVQVTDSPYVIHSENILYRIAFEDFSNNTKFLRFVHSKGEPDIKKRRIMIDLANNTVYSVNTTYAGNSVGLKKLALRLTIMKAVEEGWLSEHMAIVGFNGDKGIHYFTASFPSGSGKTSTSMIGNLISDDLAFIREFEGLPKAVNPEIGVFGIIQGINARDDPIIWEVLHKPGEVIFSNVLMTEDGDVYWEGSELPKPERGYNHEGRWDRESGKPASHPNARFTVPLTSFSNLDKNWDNPNGVIIDGIIFGVRDYSTLVPVVEAFSWSHGVITIGASMESARTSAVIGKSDELEFNPMAILDFMPISLSRYLRNYLNFGKRLRKSPKIFGFNYFLKDDNKFLNSKEDKKVWVSWAVKRVEETANAIYTPIGLIPFYEDLKALFKRVLGKEYGKEEYEKQFTIKLRKYLEKTERIIEIYLKFEDIPSEVINELKMQKERIVDYINKYGDSVSPFRLEKD.

Substrate is bound by residues arginine 87 and 209–211 (YAG). Residues lysine 218 and histidine 237 each contribute to the Mn(2+) site. A substrate-binding site is contributed by serine 258. 259–264 (GSGKTS) is a GTP binding site. Serine 260 is an active-site residue. Aspartate 275 is a Mn(2+) binding site. 365 to 367 (NAR) is a binding site for substrate. GTP is bound by residues arginine 367 and arginine 398.

Belongs to the phosphoenolpyruvate carboxykinase [GTP] family. Requires Mn(2+) as cofactor.

It is found in the cytoplasm. The catalysed reaction is oxaloacetate + GTP = phosphoenolpyruvate + GDP + CO2. The protein operates within carbohydrate biosynthesis; gluconeogenesis. Catalyzes the conversion of oxaloacetate (OAA) to phosphoenolpyruvate (PEP), the rate-limiting step in the metabolic pathway that produces glucose from lactate and other precursors derived from the citric acid cycle. This chain is Phosphoenolpyruvate carboxykinase [GTP], found in Saccharolobus solfataricus (strain ATCC 35092 / DSM 1617 / JCM 11322 / P2) (Sulfolobus solfataricus).